The following is a 510-amino-acid chain: UDP-N-acetylmuramyl-tripeptide synthetase (510 aa).

Residue serine 36 coordinates UDP-N-acetyl-alpha-D-muramoyl-L-alanyl-D-glutamate. 113–119 is a binding site for ATP; that stretch reads GTKGKTT. UDP-N-acetyl-alpha-D-muramoyl-L-alanyl-D-glutamate contacts are provided by residues 159-160, serine 186, and arginine 194; that span reads TT. Lysine 228 carries the N6-carboxylysine modification.

Belongs to the MurCDEF family. MurE subfamily. Carboxylation is probably crucial for Mg(2+) binding and, consequently, for the gamma-phosphate positioning of ATP.

It localises to the cytoplasm. It functions in the pathway cell wall biogenesis; peptidoglycan biosynthesis. Catalyzes the addition of an amino acid to the nucleotide precursor UDP-N-acetylmuramoyl-L-alanyl-D-glutamate (UMAG) in the biosynthesis of bacterial cell-wall peptidoglycan. The protein is UDP-N-acetylmuramyl-tripeptide synthetase of Ligilactobacillus salivarius (strain UCC118) (Lactobacillus salivarius).